Here is a 1716-residue protein sequence, read N- to C-terminus: Histone-lysine N-methyltransferase SETD1A (1716 aa).

Positions 60-89 (LQDPRCHVRSKARDFSLPVPKFKLDEFYIG) are interaction with WDR82. Positions 84 to 172 (DEFYIGQIPL…NIIHAQLDIK (89 aa)) constitute an RRM domain. Disordered regions lie at residues 194 to 367 (PTGG…SSYP), 380 to 499 (TSYP…AQHS), 516 to 670 (FSFL…PPPH), 849 to 869 (AKPFQNAAKQQAKEEDKEKMK), 911 to 1206 (KRKE…SRKV), 1230 to 1259 (EEVARGGRNRAGGRVRSTEEEEATESGTEV), and 1275 to 1297 (GLATLPTGDDSEATETSDEAERP). Residues 222 to 231 (SDTAAYPAGT) are compositionally biased toward low complexity. Residues 243 to 277 (CSQDTNFSSSRQDTPSSFGQFTPQSSQGTPYTSRG) show a composition bias toward polar residues. Composition is skewed to low complexity over residues 278–295 (STPYSQDSAYSSSTTSTS) and 315–357 (STSS…SSAS). The segment covering 430-440 (SEAPPPEPPEP) has biased composition (pro residues). Positions 441-461 (GGGGGGSGGGGGGGGGGGGGA) are enriched in gly residues. Serine 477 is modified (phosphoserine). Residues 477-487 (SPARSGSPAPE) are compositionally biased toward low complexity. Polar residues predominate over residues 488–499 (TTNESVPFAQHS). Phosphoserine occurs at positions 521 and 578. The segment covering 581-591 (ANGQNQASPCS) has biased composition (polar residues). 2 stretches are compositionally biased toward pro residues: residues 606 to 631 (SPPPAPTPPQQPPPPPPPPPPPPPPY) and 638 to 670 (GYPPHQPAYLLPPRPDGPPPPEYPPPPPPPPPH). Residues 859–869 (QAKEEDKEKMK) show a composition bias toward basic and acidic residues. The residue at position 930 (serine 930) is a Phosphoserine. Composition is skewed to acidic residues over residues 991–1009 (KDEDDDDEDEEDEEQEEAV) and 1018–1027 (ASDGEDEDSD). Residues 1028–1071 (SSSQCSLYADSDGENGSTSDSESGSSSSSSSSSSSSSSSSSSES) show a composition bias toward low complexity. Serine 1110 is subject to Phosphoserine. A compositionally biased stretch (pro residues) spans 1130–1150 (EEPPPSVPQPPAEPPAGPPDA). Residues 1283–1292 (DDSEATETSD) show a composition bias toward acidic residues. Positions 1307–1311 (EHNYA) match the HCFC1-binding motif (HBM) motif. Disordered stretches follow at residues 1355–1427 (EEPK…FEPR) and 1480–1508 (TNLSTPKRKRRPQDGPREHQTGSARSEGY). A compositionally biased stretch (acidic residues) spans 1369 to 1383 (EGEEEEEDEEEESES). Positions 1399 to 1412 (RRRSLRSHTRRRRP) are enriched in basic residues. Positions 1413-1424 (PLPPPPPPPPSF) are enriched in pro residues. The tract at residues 1424 to 1459 (FEPRSEFEQMTILYDIWNSGLDLEDMSYLRLTYERL) is interaction with CFP1. The segment at 1459 to 1546 (LLQQTSGADW…GTNRVLSERR (88 aa)) is interaction with ASH2L, RBBP5 and WDR5. The WDR5 interaction motif (WIN) motif lies at 1501 to 1506 (GSARSE). The RxxxRR motif motif lies at 1546–1551 (RSEQRR). The 118-residue stretch at 1577-1694 (KKLRFGRSRI…VDEEITYDYK (118 aa)) folds into the SET domain. Residue tyrosine 1693 participates in S-adenosyl-L-methionine binding. Residues 1700 to 1716 (NKIPCLCGTESCRGSLN) form the Post-SET domain.

It belongs to the class V-like SAM-binding methyltransferase superfamily. In terms of assembly, component of the SET1A/COMPASS complex composed of the catalytic subunit SETD1A, WDR5, WDR82, RBBP5, ASH2L/ASH2, CXXC1/CFP1, HCFC1 and DPY30 homotrimer. Forms a core complex with the evolutionary conserved subcomplex WRAD composed of WDR5, RBBP5, ASH2L/ASH2 and DPY30 subunits; WRAD differentially stimulates the methyltransferase activity. Interacts with BOD1L1 (via COMPASS-Shg1 domain) at replication forks. Interacts with HCFC1. Interacts with ASH2/ASH2L. Interacts with CXXC1/CFP1. Interacts with RBBP5. Interacts (via N-terminal region) with WDR82; the interaction is direct. Interacts (via the RRM domain) with hyperphosphorylated C-terminal domain (CTD) of RNA polymerase II large subunit (POLR2A) only in the presence of WDR82. Binds specifically to CTD heptad repeats phosphorylated on 'Ser-5' of each heptad. Interacts with ZNF335. Interacts with SUPT6H. Interacts with NAP1L1. Interacts (via WIN motif) with WDR5.

Its subcellular location is the nucleus. The protein localises to the nucleus speckle. It is found in the chromosome. It localises to the cytoplasm. The enzyme catalyses L-lysyl(4)-[histone H3] + S-adenosyl-L-methionine = N(6)-methyl-L-lysyl(4)-[histone H3] + S-adenosyl-L-homocysteine + H(+). The catalysed reaction is N(6)-methyl-L-lysyl(4)-[histone H3] + S-adenosyl-L-methionine = N(6),N(6)-dimethyl-L-lysyl(4)-[histone H3] + S-adenosyl-L-homocysteine + H(+). It carries out the reaction N(6),N(6)-dimethyl-L-lysyl(4)-[histone H3] + S-adenosyl-L-methionine = N(6),N(6),N(6)-trimethyl-L-lysyl(4)-[histone H3] + S-adenosyl-L-homocysteine + H(+). Its function is as follows. Histone methyltransferase that catalyzes methyl group transfer from S-adenosyl-L-methionine to the epsilon-amino group of 'Lys-4' of histone H3 (H3K4) via a non-processive mechanism. Part of chromatin remodeling machinery, forms H3K4me1, H3K4me2 and H3K4me3 methylation marks at active chromatin sites where transcription and DNA repair take place. Responsible for H3K4me3 enriched promoters and transcriptional programming of inner mass stem cells and neuron progenitors during embryogenesis. Required for H3K4me1 mark at stalled replication forks. Mediates FANCD2-dependent nucleosome remodeling and RAD51 nucleofilaments stabilization at reversed forks, protecting them from nucleolytic degradation. Does not methylate 'Lys-4' of histone H3 if the neighboring 'Lys-9' residue is already methylated. Has RNA binding activity towards transcripts involved in RNA processing and the DNA damage response. This Mus musculus (Mouse) protein is Histone-lysine N-methyltransferase SETD1A (Setd1a).